The sequence spans 554 residues: Formate--tetrahydrofolate ligase (554 aa).

Position 65-72 (65-72 (TPLGEGKT)) interacts with ATP.

The protein belongs to the formate--tetrahydrofolate ligase family.

It catalyses the reaction (6S)-5,6,7,8-tetrahydrofolate + formate + ATP = (6R)-10-formyltetrahydrofolate + ADP + phosphate. Its pathway is one-carbon metabolism; tetrahydrofolate interconversion. In Aliivibrio salmonicida (strain LFI1238) (Vibrio salmonicida (strain LFI1238)), this protein is Formate--tetrahydrofolate ligase.